An 87-amino-acid chain; its full sequence is Small ribosomal subunit protein eS21 (87 aa).

This sequence belongs to the eukaryotic ribosomal protein eS21 family. As to quaternary structure, component of the small ribosomal subunit. Mature ribosomes consist of a small (40S) and a large (60S) subunit. The 40S subunit contains about 33 different proteins and 1 molecule of RNA (18S). The 60S subunit contains about 49 different proteins and 3 molecules of RNA (25S, 5.8S and 5S).

The protein localises to the cytoplasm. Functionally, required for the processing of the 20S rRNA-precursor to mature 18S rRNA in a late step of the maturation of 40S ribosomal subunits. Has a physiological role leading to 18S rRNA stability. The chain is Small ribosomal subunit protein eS21 (RPS21) from Kluyveromyces lactis (strain ATCC 8585 / CBS 2359 / DSM 70799 / NBRC 1267 / NRRL Y-1140 / WM37) (Yeast).